A 452-amino-acid polypeptide reads, in one-letter code: Disintegrin and metalloproteinase domain-containing protein 11 (452 aa).

One can recognise a Peptidase M12B domain in the interval 1–120 (RRHHSPLLVS…GGGSCLFNKP (120 aa)). Residues 1 to 417 (RRHHSPLLVS…EKYKGPSGTN (417 aa)) lie on the Extracellular side of the membrane. 3 cysteine pairs are disulfide-bonded: C31/C115, C74/C99, and C76/C83. In terms of domain architecture, Disintegrin spans 126 to 214 (PPSCGNGFIE…ACPANLHKQD (89 aa)). N149 is a glycosylation site (N-linked (GlcNAc...) asparagine). A disulfide bridge links C186 with C206. N-linked (GlcNAc...) asparagine glycosylation is found at N288 and N356. 3 disulfide bridges follow: C360/C375, C369/C381, and C383/C392. The region spanning 360–416 (CPGSWNGVICSDHGVCSNEGKCICHPEWTGKDCSVYDPLPVPKPTGVVEKYKGPSGT) is the EGF-like domain. Residues 418-438 (IIIGSIAGAVLIAAIVLGGTG) traverse the membrane as a helical segment. Residues 439–452 (WGFKNIRRGRSGGG) lie on the Cytoplasmic side of the membrane.

In terms of processing, the precursor is cleaved by a furin endopeptidase. As to expression, detected in testis and barely expressed in heart and muscle. Not detectable in liver.

It localises to the presynaptic cell membrane. The protein resides in the perikaryon. It is found in the cell projection. The protein localises to the axon. Functionally, probable ligand for integrin in the brain. This is a non-catalytic metalloprotease-like protein. The sequence is that of Disintegrin and metalloproteinase domain-containing protein 11 (adam11) from Xenopus laevis (African clawed frog).